A 159-amino-acid chain; its full sequence is G-protein-signaling modulator 3 (159 aa).

Residues 1 to 54 (MEAERPQEEDGEQSLPQDDQGWPPVNATARPWRSAPPSPPPPGTRHTALGPRSG) form a disordered region. 4 positions are modified to phosphoserine: Ser-34, Ser-38, Ser-55, and Ser-58. Pro residues predominate over residues 34 to 43 (SAPPSPPPPG). The residue at position 61 (Thr-61) is a Phosphothreonine. Residues 61-83 (TELLLDLVAEAQSRRLEEQRATF) enclose the GoLoco 1 domain. Residues 77–97 (EEQRATFHTPEAPPNLAPAPP) form a disordered region. A compositionally biased stretch (pro residues) spans 87 to 97 (EAPPNLAPAPP). GoLoco domains are found at residues 103–125 (KEQL…RSDP) and 131–154 (GQEL…RSRP).

The protein resides in the cytoplasm. Interacts with subunit of G(i) alpha proteins and regulates the activation of G(i) alpha proteins. The polypeptide is G-protein-signaling modulator 3 (Gpsm3) (Mus musculus (Mouse)).